Here is a 252-residue protein sequence, read N- to C-terminus: 3-dehydroquinate dehydratase (252 aa).

Residues Ser21, 46-48 (EWR), and Arg82 each bind 3-dehydroquinate. His143 functions as the Proton donor/acceptor in the catalytic mechanism. The active-site Schiff-base intermediate with substrate is the Lys170. Residues Arg213, Ser232, and Gln236 each coordinate 3-dehydroquinate.

This sequence belongs to the type-I 3-dehydroquinase family. In terms of assembly, homodimer.

It catalyses the reaction 3-dehydroquinate = 3-dehydroshikimate + H2O. Its pathway is metabolic intermediate biosynthesis; chorismate biosynthesis; chorismate from D-erythrose 4-phosphate and phosphoenolpyruvate: step 3/7. In terms of biological role, involved in the third step of the chorismate pathway, which leads to the biosynthesis of aromatic amino acids. Catalyzes the cis-dehydration of 3-dehydroquinate (DHQ) and introduces the first double bond of the aromatic ring to yield 3-dehydroshikimate. This Escherichia coli O7:K1 (strain IAI39 / ExPEC) protein is 3-dehydroquinate dehydratase.